Consider the following 64-residue polypeptide: Large ribosomal subunit protein bL35c (64 aa).

This sequence belongs to the bacterial ribosomal protein bL35 family.

The protein resides in the plastid. It is found in the chloroplast. This Thalassiosira pseudonana (Marine diatom) protein is Large ribosomal subunit protein bL35c.